Here is a 208-residue protein sequence, read N- to C-terminus: uncharacterized protein (208 aa).

This is an uncharacterized protein from Caenorhabditis elegans.